The primary structure comprises 645 residues: 1-deoxy-D-xylulose-5-phosphate synthase 1 (645 aa).

The segment at 1–20 (MTDTKTPTLDRVAGPADLRS) is disordered. Residues H78 and 119–121 (AHS) each bind thiamine diphosphate. D150 provides a ligand contact to Mg(2+). Residues 151–152 (GS), N179, Y291, and E373 each bind thiamine diphosphate. N179 contacts Mg(2+).

The protein belongs to the transketolase family. DXPS subfamily. Homodimer. Mg(2+) serves as cofactor. Thiamine diphosphate is required as a cofactor.

It catalyses the reaction D-glyceraldehyde 3-phosphate + pyruvate + H(+) = 1-deoxy-D-xylulose 5-phosphate + CO2. Its pathway is metabolic intermediate biosynthesis; 1-deoxy-D-xylulose 5-phosphate biosynthesis; 1-deoxy-D-xylulose 5-phosphate from D-glyceraldehyde 3-phosphate and pyruvate: step 1/1. Functionally, catalyzes the acyloin condensation reaction between C atoms 2 and 3 of pyruvate and glyceraldehyde 3-phosphate to yield 1-deoxy-D-xylulose-5-phosphate (DXP). In Roseobacter denitrificans (strain ATCC 33942 / OCh 114) (Erythrobacter sp. (strain OCh 114)), this protein is 1-deoxy-D-xylulose-5-phosphate synthase 1.